Here is a 207-residue protein sequence, read N- to C-terminus: Ribosomal RNA small subunit methyltransferase G (207 aa).

S-adenosyl-L-methionine-binding positions include G73, L78, 124–125, and R139; that span reads VE.

This sequence belongs to the methyltransferase superfamily. RNA methyltransferase RsmG family.

Its subcellular location is the cytoplasm. It catalyses the reaction guanosine(527) in 16S rRNA + S-adenosyl-L-methionine = N(7)-methylguanosine(527) in 16S rRNA + S-adenosyl-L-homocysteine. Its function is as follows. Specifically methylates the N7 position of guanine in position 527 of 16S rRNA. The polypeptide is Ribosomal RNA small subunit methyltransferase G (Escherichia fergusonii (strain ATCC 35469 / DSM 13698 / CCUG 18766 / IAM 14443 / JCM 21226 / LMG 7866 / NBRC 102419 / NCTC 12128 / CDC 0568-73)).